A 282-amino-acid chain; its full sequence is NADPH-dependent 7-cyano-7-deazaguanine reductase (282 aa).

Position 88–90 (88–90) interacts with substrate; the sequence is IES. 90-91 contributes to the NADPH binding site; the sequence is SK. C190 acts as the Thioimide intermediate in catalysis. The Proton donor role is filled by D197. 229–230 serves as a coordination point for substrate; that stretch reads HE. 258–259 provides a ligand contact to NADPH; sequence RG.

This sequence belongs to the GTP cyclohydrolase I family. QueF type 2 subfamily. In terms of assembly, homodimer.

It is found in the cytoplasm. The catalysed reaction is 7-aminomethyl-7-carbaguanine + 2 NADP(+) = 7-cyano-7-deazaguanine + 2 NADPH + 3 H(+). The protein operates within tRNA modification; tRNA-queuosine biosynthesis. Catalyzes the NADPH-dependent reduction of 7-cyano-7-deazaguanine (preQ0) to 7-aminomethyl-7-deazaguanine (preQ1). This Citrobacter koseri (strain ATCC BAA-895 / CDC 4225-83 / SGSC4696) protein is NADPH-dependent 7-cyano-7-deazaguanine reductase.